The primary structure comprises 109 residues: Large ribosomal subunit protein uL23 (109 aa).

The protein belongs to the universal ribosomal protein uL23 family. Part of the 50S ribosomal subunit. Contacts protein L29, and trigger factor when it is bound to the ribosome.

One of the early assembly proteins it binds 23S rRNA. One of the proteins that surrounds the polypeptide exit tunnel on the outside of the ribosome. Forms the main docking site for trigger factor binding to the ribosome. The protein is Large ribosomal subunit protein uL23 of Haemophilus influenzae (strain PittEE).